The chain runs to 152 residues: Zinc finger SWIM domain-containing protein 7 (152 aa).

The segment at 76-114 adopts an SWIM-type zinc-finger fold; it reads YTCLASCHYCSCPAFSFSVLRKSDSLLCKHLLAIYLSQL.

Belongs to the SWS1 family. In terms of assembly, interacts with RAD51D and XRCC3; involved in homologous recombination repair. Interacts with SWSAP1; they form a functional complex involved in homologous recombination repair and stabilize each other.

It localises to the nucleus. Functionally, involved in early stages of the homologous recombination repair (HRR) pathway of double-stranded DNA breaks arising during DNA replication or induced by DNA-damaging agents. Required for meiotic progression, hence for fertility. This Mus musculus (Mouse) protein is Zinc finger SWIM domain-containing protein 7 (Zswim7).